The primary structure comprises 84 residues: Putative membrane protein insertion efficiency factor (84 aa).

Belongs to the UPF0161 family.

It is found in the cell inner membrane. In terms of biological role, could be involved in insertion of integral membrane proteins into the membrane. This is Putative membrane protein insertion efficiency factor from Shewanella denitrificans (strain OS217 / ATCC BAA-1090 / DSM 15013).